A 136-amino-acid chain; its full sequence is Holo-[acyl-carrier-protein] synthase (136 aa).

Asp8 and Glu57 together coordinate Mg(2+).

It belongs to the P-Pant transferase superfamily. AcpS family. Mg(2+) serves as cofactor.

The protein resides in the cytoplasm. It carries out the reaction apo-[ACP] + CoA = holo-[ACP] + adenosine 3',5'-bisphosphate + H(+). In terms of biological role, transfers the 4'-phosphopantetheine moiety from coenzyme A to a Ser of acyl-carrier-protein. The polypeptide is Holo-[acyl-carrier-protein] synthase (Methylorubrum populi (strain ATCC BAA-705 / NCIMB 13946 / BJ001) (Methylobacterium populi)).